We begin with the raw amino-acid sequence, 537 residues long: Trypsin-resistant surface T6 protein (537 aa).

The signal sequence occupies residues 1–22; that stretch reads MLACLAILAVVGLGMTRVSALS. The tract at residues 310–330 is hydrophilic; sequence GNTYDNLDKKPDKGNGITSKE. An LPXTG sorting signal motif is present at residues 504 to 508; it reads LPSTG. Thr507 carries the pentaglycyl murein peptidoglycan amidated threonine modification. A propeptide spans 508–537 (removed by sortase); sequence GSIGTYLFKAIGSAAMIGAIGIYIVKRRKA.

It localises to the secreted. The protein localises to the cell wall. The polypeptide is Trypsin-resistant surface T6 protein (tee6) (Streptococcus pyogenes serotype M6 (strain ATCC BAA-946 / MGAS10394)).